Consider the following 500-residue polypeptide: Sulfate adenylyltransferase (500 aa).

The segment at 1-165 (MLSPHGGILQ…LEAIQLPAHY (165 aa)) is N-terminal. The segment at 166 to 390 (DYLNLRKSPA…LRQYNPPRYR (225 aa)) is catalytic. Residue Q193 participates in sulfate binding. Residues 193–196 (QTRN) and 287–290 (GRDH) contribute to the ATP site. Active-site residues include T194, R195, and N196. Sulfate is bound at residue R195. Position 291 (A291) interacts with sulfate. I329 contributes to the ATP binding site. Residues 391-500 (QGFVIVVNHE…FLEDNKFFQF (110 aa)) form a required for oligomerization; adenylyl-sulfate kinase-like region.

It belongs to the sulfate adenylyltransferase family. Homohexamer. Dimer of trimers.

Its subcellular location is the cytoplasm. It catalyses the reaction sulfate + ATP + H(+) = adenosine 5'-phosphosulfate + diphosphate. Its pathway is sulfur metabolism; hydrogen sulfide biosynthesis; sulfite from sulfate: step 1/3. Its function is as follows. Catalyzes the first intracellular reaction of sulfate assimilation, forming adenosine-5'-phosphosulfate (APS) from inorganic sulfate and ATP. Plays an important role in sulfate activation as a component of the biosynthesis pathway of sulfur-containing amino acids. The polypeptide is Sulfate adenylyltransferase (Eremothecium gossypii (strain ATCC 10895 / CBS 109.51 / FGSC 9923 / NRRL Y-1056) (Yeast)).